We begin with the raw amino-acid sequence, 199 residues long: NAD(P)H dehydrogenase (quinone) (199 aa).

Residues Val4 to Val190 enclose the Flavodoxin-like domain. FMN-binding positions include Ser10–Ile15 and Thr79–Phe81. NAD(+) is bound at residue Tyr12. A substrate-binding site is contributed by Trp99. Position 134 (His134) interacts with FMN.

It belongs to the WrbA family. FMN is required as a cofactor.

The catalysed reaction is a quinone + NADH + H(+) = a quinol + NAD(+). The enzyme catalyses a quinone + NADPH + H(+) = a quinol + NADP(+). This Tolumonas auensis (strain DSM 9187 / NBRC 110442 / TA 4) protein is NAD(P)H dehydrogenase (quinone).